The following is a 504-amino-acid chain: One cut domain family member 2 (504 aa).

Disordered stretches follow at residues 29 to 95 (LGTL…GTAA), 166 to 189 (KFHH…RLSG), 274 to 332 (EQHL…QLEE), and 485 to 504 (WQDD…CTKA). Residues 35–56 (PAGGGSGGGGGGGGGGGGGGPG) show a composition bias toward gly residues. The segment covering 168-186 (HHPHPHHHPHHHHHHHHQR) has biased composition (basic residues). The CUT DNA-binding region spans 324-410 (VATSGQLEEI…QRMSALRLAA (87 aa)). The homeobox DNA-binding region spans 426 to 485 (QKKSRLVFTDLQRRTLFAIFKENKRPSKEMQITISQQLGLELTTVSNFFMNARRRSLEKW). A compositionally biased stretch (low complexity) spans 490 to 504 (STGGSSSTSSTCTKA).

The protein belongs to the CUT homeobox family.

It is found in the nucleus. In terms of biological role, transcriptional activator. Activates the transcription of a number of liver genes such as HNF3B. The protein is One cut domain family member 2 (ONECUT2) of Homo sapiens (Human).